The primary structure comprises 145 residues: Secreted RxLR effector protein PSE1 (145 aa).

An N-terminal signal peptide occupies residues 1–21; sequence MRLSSFIVVGAAVVNLLTSGS. The RxLR-dEER signature appears at 53 to 73; sequence RLLRYHSNNNRGGDEDIAEER.

The protein belongs to the RxLR effector family.

Its subcellular location is the secreted. The protein resides in the host cell. In terms of biological role, secreted effector that impairs both plant effector-triggered immunity and pathogen-associated molecular patterns (PAMP)-triggered immunity (PTI). Suppresses plant cell death as a part of the plant defense responses. Facilitates plant infection by altering the auxin content at the roots penetration points of the of the pathogen. The protein is Secreted RxLR effector protein PSE1 of Phytophthora nicotianae (Potato buckeye rot agent).